A 150-amino-acid chain; its full sequence is Large ribosomal subunit protein bL9 (150 aa).

It belongs to the bacterial ribosomal protein bL9 family.

In terms of biological role, binds to the 23S rRNA. This chain is Large ribosomal subunit protein bL9, found in Colwellia psychrerythraea (strain 34H / ATCC BAA-681) (Vibrio psychroerythus).